The primary structure comprises 616 residues: Chaperone protein HscA (616 aa).

It belongs to the heat shock protein 70 family.

In terms of biological role, chaperone involved in the maturation of iron-sulfur cluster-containing proteins. Has a low intrinsic ATPase activity which is markedly stimulated by HscB. Involved in the maturation of IscU. The sequence is that of Chaperone protein HscA from Escherichia coli (strain SMS-3-5 / SECEC).